The chain runs to 193 residues: Large ribosomal subunit protein bL25 (193 aa).

It belongs to the bacterial ribosomal protein bL25 family. CTC subfamily. Part of the 50S ribosomal subunit; part of the 5S rRNA/L5/L18/L25 subcomplex. Contacts the 5S rRNA. Binds to the 5S rRNA independently of L5 and L18.

Its function is as follows. This is one of the proteins that binds to the 5S RNA in the ribosome where it forms part of the central protuberance. The protein is Large ribosomal subunit protein bL25 of Clostridium tetani (strain Massachusetts / E88).